A 91-amino-acid polypeptide reads, in one-letter code: Small ribosomal subunit protein uS19 (91 aa).

This sequence belongs to the universal ribosomal protein uS19 family.

In terms of biological role, protein S19 forms a complex with S13 that binds strongly to the 16S ribosomal RNA. This is Small ribosomal subunit protein uS19 from Methylacidiphilum infernorum (isolate V4) (Methylokorus infernorum (strain V4)).